The primary structure comprises 182 residues: Putative pre-16S rRNA nuclease (182 aa).

Belongs to the YqgF nuclease family.

Its subcellular location is the cytoplasm. Could be a nuclease involved in processing of the 5'-end of pre-16S rRNA. The chain is Putative pre-16S rRNA nuclease from Corynebacterium glutamicum (strain ATCC 13032 / DSM 20300 / JCM 1318 / BCRC 11384 / CCUG 27702 / LMG 3730 / NBRC 12168 / NCIMB 10025 / NRRL B-2784 / 534).